Consider the following 472-residue polypeptide: Adenosylhomocysteinase (472 aa).

Residues Thr-62, Asp-137, and Glu-197 each coordinate substrate. 198–200 (TTT) is a binding site for NAD(+). The substrate site is built by Lys-227 and Asp-231. Residues Asn-232, 261-266 (GYGDVG), Glu-284, Asn-319, 340-342 (IGH), and Asn-385 each bind NAD(+).

Belongs to the adenosylhomocysteinase family. NAD(+) is required as a cofactor.

Its subcellular location is the cytoplasm. The catalysed reaction is S-adenosyl-L-homocysteine + H2O = L-homocysteine + adenosine. The protein operates within amino-acid biosynthesis; L-homocysteine biosynthesis; L-homocysteine from S-adenosyl-L-homocysteine: step 1/1. Its function is as follows. May play a key role in the regulation of the intracellular concentration of adenosylhomocysteine. This Bordetella bronchiseptica (strain ATCC BAA-588 / NCTC 13252 / RB50) (Alcaligenes bronchisepticus) protein is Adenosylhomocysteinase.